The primary structure comprises 250 residues: 5-oxoprolinase subunit A (250 aa).

It belongs to the LamB/PxpA family. As to quaternary structure, forms a complex composed of PxpA, PxpB and PxpC.

The enzyme catalyses 5-oxo-L-proline + ATP + 2 H2O = L-glutamate + ADP + phosphate + H(+). Functionally, catalyzes the cleavage of 5-oxoproline to form L-glutamate coupled to the hydrolysis of ATP to ADP and inorganic phosphate. In Paraburkholderia phymatum (strain DSM 17167 / CIP 108236 / LMG 21445 / STM815) (Burkholderia phymatum), this protein is 5-oxoprolinase subunit A.